We begin with the raw amino-acid sequence, 475 residues long: UDP-N-acetylmuramate--L-alanine ligase (475 aa).

125–131 (GTHGKTT) is an ATP binding site.

This sequence belongs to the MurCDEF family.

Its subcellular location is the cytoplasm. It carries out the reaction UDP-N-acetyl-alpha-D-muramate + L-alanine + ATP = UDP-N-acetyl-alpha-D-muramoyl-L-alanine + ADP + phosphate + H(+). It participates in cell wall biogenesis; peptidoglycan biosynthesis. Cell wall formation. In Actinobacillus pleuropneumoniae serotype 5b (strain L20), this protein is UDP-N-acetylmuramate--L-alanine ligase.